Reading from the N-terminus, the 307-residue chain is Pantothenate kinase (307 aa).

90-97 (GSVAVGKS) provides a ligand contact to ATP.

This sequence belongs to the prokaryotic pantothenate kinase family.

The protein resides in the cytoplasm. The enzyme catalyses (R)-pantothenate + ATP = (R)-4'-phosphopantothenate + ADP + H(+). It functions in the pathway cofactor biosynthesis; coenzyme A biosynthesis; CoA from (R)-pantothenate: step 1/5. In Limosilactobacillus reuteri subsp. reuteri (strain JCM 1112) (Lactobacillus reuteri), this protein is Pantothenate kinase.